A 190-amino-acid chain; its full sequence is Vexin (190 aa).

A disordered region spans residues 88–156 (AEKKASRFSR…DEATLPLTAH (69 aa)). Residues 117-133 (TDKQNAPTVPASPSSYE) are compositionally biased toward polar residues. Positions 136 to 149 (GCREQRPENPKDEA) are enriched in basic and acidic residues.

This sequence belongs to the vexin family. Expressed in differentiating progenitors in the developing central nervous system (CNS).

The protein localises to the cell membrane. It localises to the nucleus. Required for neurogenesis in the neural plate and retina. Cooperates with cell cycle inhibitor cdknx/p27(xic1) to enhance neurogenesis and increase the levels of the neuronal determination factor neurog2/X-ngngr-1. The sequence is that of Vexin from Xenopus laevis (African clawed frog).